A 105-amino-acid polypeptide reads, in one-letter code: Wound-induced protein 1 (105 aa).

To potato anionic peroxidase. As to expression, ubiquitous.

In Solanum tuberosum (Potato), this protein is Wound-induced protein 1 (WUN1).